The following is a 612-amino-acid chain: Membrane protein insertase YidC (612 aa).

7 consecutive transmembrane segments (helical) span residues 4-24, 329-349, 358-378, 434-454, 484-504, 524-544, and 546-566; these read NTIIGFILIFWVLFGFAYLNH, LVPLGWSLFRAINKCLIIPIF, VNLGLAILILTLIIKIALFPL, ILLQMPFLIALFMFFPSAIGL, FLGNHISLFCLLMSLATILNT, LTMYFMPVVMFFFLNSYPAGL, and YYYLISTLITIMQTIIFRGLV.

This sequence belongs to the OXA1/ALB3/YidC family. Type 1 subfamily. Interacts with the Sec translocase complex via SecD. Specifically interacts with transmembrane segments of nascent integral membrane proteins during membrane integration.

It localises to the cell inner membrane. Its function is as follows. Required for the insertion and/or proper folding and/or complex formation of integral membrane proteins into the membrane. Involved in integration of membrane proteins that insert both dependently and independently of the Sec translocase complex, as well as at least some lipoproteins. Aids folding of multispanning membrane proteins. The chain is Membrane protein insertase YidC from Azobacteroides pseudotrichonymphae genomovar. CFP2.